A 384-amino-acid polypeptide reads, in one-letter code: MTSATASLTPALNSLGFAKPPSETRVVVAMSGGVDSSVVAAELACEGYDVVGVTLQLYDHGAALAKKGACCAGRDIHDARRVAEEMGFPHYVLDYENTFREAVIDEFADSYLGGATPVPCIRCNERVKFKDLLETARDLEADCMATGHYIQRKMGPAKAELHSAADANRDQSYFLFSTTQEQLDYLRFPLGHLASKAETRALAAKHGLSVADKPDSQDICFVPNGDYASVIEKLRPGAGEPGEIVDMDGTVLGAHRGVIHYTIGQRRGLGIGGLETPLYVVKLDPDARRVIVGPKEALSTRHVPLREINWLGDAPLSSRAEWPIAVKVRSTRPPRDAILRPISDTEATVELLTPEEGVSPGQACVFYDPDGTRIFGGGWIWRGA.

ATP-binding positions include 29–36 (AMSGGVDS) and leucine 55. Cysteine 123 (nucleophile) is an active-site residue. Cysteine 123 and cysteine 220 are joined by a disulfide. An ATP-binding site is contributed by glycine 147. Residues 169-171 (RDQ) form an interaction with tRNA region. Residue cysteine 220 is the Cysteine persulfide intermediate of the active site.

It belongs to the MnmA/TRMU family.

The protein resides in the cytoplasm. The catalysed reaction is S-sulfanyl-L-cysteinyl-[protein] + uridine(34) in tRNA + AH2 + ATP = 2-thiouridine(34) in tRNA + L-cysteinyl-[protein] + A + AMP + diphosphate + H(+). Its function is as follows. Catalyzes the 2-thiolation of uridine at the wobble position (U34) of tRNA, leading to the formation of s(2)U34. The chain is tRNA-specific 2-thiouridylase MnmA from Dinoroseobacter shibae (strain DSM 16493 / NCIMB 14021 / DFL 12).